A 133-amino-acid polypeptide reads, in one-letter code: Large ribosomal subunit protein uL22 (133 aa).

The protein belongs to the universal ribosomal protein uL22 family. In terms of assembly, part of the 50S ribosomal subunit.

In terms of biological role, this protein binds specifically to 23S rRNA; its binding is stimulated by other ribosomal proteins, e.g. L4, L17, and L20. It is important during the early stages of 50S assembly. It makes multiple contacts with different domains of the 23S rRNA in the assembled 50S subunit and ribosome. Its function is as follows. The globular domain of the protein is located near the polypeptide exit tunnel on the outside of the subunit, while an extended beta-hairpin is found that lines the wall of the exit tunnel in the center of the 70S ribosome. The polypeptide is Large ribosomal subunit protein uL22 (Nocardia farcinica (strain IFM 10152)).